Consider the following 174-residue polypeptide: Pediocin PA-1 biosynthesis protein PedC (174 aa).

In terms of biological role, probably involved in pediocin PA-1 biosynthesis. This chain is Pediocin PA-1 biosynthesis protein PedC (pedC), found in Pediococcus acidilactici.